The sequence spans 238 residues: Opacity protein opA68 (238 aa).

Residue Ala-1 is a signal peptide. Residues 88 to 109 (NLQRRTSNGNRRDRKTENQENG) are disordered.

This sequence belongs to the opacity porin family.

The protein resides in the cell outer membrane. Functionally, implicated in a number of adherence functions. OPA proteins are implicated in pathogenesis and are subject to phase variation. The sequence is that of Opacity protein opA68 from Neisseria gonorrhoeae.